We begin with the raw amino-acid sequence, 214 residues long: Orotate phosphoribosyltransferase (214 aa).

K26 is a binding site for 5-phospho-alpha-D-ribose 1-diphosphate. Position 34–35 (F34–F35) interacts with orotate. 5-phospho-alpha-D-ribose 1-diphosphate contacts are provided by residues Y72 to K73, R99, K100, K103, H105, and D124 to A132. Positions 128 and 157 each coordinate orotate.

The protein belongs to the purine/pyrimidine phosphoribosyltransferase family. PyrE subfamily. Homodimer. Mg(2+) serves as cofactor.

The enzyme catalyses orotidine 5'-phosphate + diphosphate = orotate + 5-phospho-alpha-D-ribose 1-diphosphate. It participates in pyrimidine metabolism; UMP biosynthesis via de novo pathway; UMP from orotate: step 1/2. Functionally, catalyzes the transfer of a ribosyl phosphate group from 5-phosphoribose 1-diphosphate to orotate, leading to the formation of orotidine monophosphate (OMP). The protein is Orotate phosphoribosyltransferase of Pseudomonas fluorescens (strain ATCC BAA-477 / NRRL B-23932 / Pf-5).